The chain runs to 261 residues: LIM and SH3 domain protein 1 (261 aa).

Methionine 1 carries the N-acetylmethionine modification. In terms of domain architecture, LIM zinc-binding spans 5 to 56; it reads CARCGKIVYPTEKVNCLDKFWHKACFHCETCKMTLNMKNYKGYEKKPYCNAH. Lysine 42 is modified (N6-acetyllysine). Nebulin repeat units lie at residues 61-95 and 97-131; these read SFTM…KNKG and GFSV…KSRM. Position 68 is a phosphothreonine (threonine 68). Position 75 is an N6-methyllysine (lysine 75). A Phosphoserine modification is found at serine 99. Threonine 104 is modified (phosphothreonine). The segment at 111–186 is disordered; the sequence is KKTQDQISNI…QPVAQSYGGY (76 aa). The residue at position 112 (lysine 112) is an N6-succinyllysine. A Phosphoserine modification is found at serine 118. Basic and acidic residues predominate over residues 121-130; sequence KYHEEFEKSR. Residues serine 134 and serine 146 each carry the phosphoserine modification. The segment covering 167–183 has biased composition (low complexity); the sequence is SAPVYQQPQQQPVAQSY. The SH3 domain occupies 202–261; the sequence is GGGKRYRAVYDYSAADEDEVSFQDGDTIVNVQQIDDGWMYGTVERTGDTGMLPANYVEAI.

Interacts with F-actin. Interacts with ANKRD54. Interacts with KBTBD10.

It localises to the cytoplasm. Its subcellular location is the cell cortex. The protein localises to the cytoskeleton. In terms of biological role, plays an important role in the regulation of dynamic actin-based, cytoskeletal activities. Agonist-dependent changes in LASP1 phosphorylation may also serve to regulate actin-associated ion transport activities, not only in the parietal cell but also in certain other F-actin-rich secretory epithelial cell types. The protein is LIM and SH3 domain protein 1 (LASP1) of Homo sapiens (Human).